The chain runs to 165 residues: Shikimate kinase (165 aa).

11–16 (GAGKTT) provides a ligand contact to ATP. Thr-15 lines the Mg(2+) pocket. 3 residues coordinate substrate: Asp-33, Arg-57, and Gly-78. Position 116 (Arg-116) interacts with ATP. Arg-134 is a binding site for substrate.

The protein belongs to the shikimate kinase family. In terms of assembly, monomer. It depends on Mg(2+) as a cofactor.

It localises to the cytoplasm. It catalyses the reaction shikimate + ATP = 3-phosphoshikimate + ADP + H(+). The protein operates within metabolic intermediate biosynthesis; chorismate biosynthesis; chorismate from D-erythrose 4-phosphate and phosphoenolpyruvate: step 5/7. Its function is as follows. Catalyzes the specific phosphorylation of the 3-hydroxyl group of shikimic acid using ATP as a cosubstrate. The protein is Shikimate kinase of Bacillus anthracis (strain A0248).